The following is a 166-amino-acid chain: Probable chemoreceptor glutamine deamidase CheD (166 aa).

This sequence belongs to the CheD family.

The enzyme catalyses L-glutaminyl-[protein] + H2O = L-glutamyl-[protein] + NH4(+). Functionally, probably deamidates glutamine residues to glutamate on methyl-accepting chemotaxis receptors (MCPs), playing an important role in chemotaxis. This chain is Probable chemoreceptor glutamine deamidase CheD, found in Clostridium acetobutylicum (strain ATCC 824 / DSM 792 / JCM 1419 / IAM 19013 / LMG 5710 / NBRC 13948 / NRRL B-527 / VKM B-1787 / 2291 / W).